Consider the following 55-residue polypeptide: uncharacterized protein (55 aa).

2 helical membrane passes run Val2 to Ala19 and Leu24 to Phe46.

It localises to the cell membrane. This is an uncharacterized protein from Alkalihalophilus pseudofirmus (strain ATCC BAA-2126 / JCM 17055 / OF4) (Bacillus pseudofirmus).